Here is a 365-residue protein sequence, read N- to C-terminus: N5-carboxyaminoimidazole ribonucleotide synthase (365 aa).

ATP contacts are provided by residues R102, K143, 148–154 (GYDGKGQ), 177–180 (EEYV), E185, and 256–257 (NE). The 181-residue stretch at 106–286 (KLFYRQHNLP…QFEQHLRAII (181 aa)) folds into the ATP-grasp domain.

The protein belongs to the PurK/PurT family. In terms of assembly, homodimer.

It catalyses the reaction 5-amino-1-(5-phospho-beta-D-ribosyl)imidazole + hydrogencarbonate + ATP = 5-carboxyamino-1-(5-phospho-D-ribosyl)imidazole + ADP + phosphate + 2 H(+). It participates in purine metabolism; IMP biosynthesis via de novo pathway; 5-amino-1-(5-phospho-D-ribosyl)imidazole-4-carboxylate from 5-amino-1-(5-phospho-D-ribosyl)imidazole (N5-CAIR route): step 1/2. Catalyzes the ATP-dependent conversion of 5-aminoimidazole ribonucleotide (AIR) and HCO(3)(-) to N5-carboxyaminoimidazole ribonucleotide (N5-CAIR). The protein is N5-carboxyaminoimidazole ribonucleotide synthase of Saccharolobus solfataricus (strain ATCC 35092 / DSM 1617 / JCM 11322 / P2) (Sulfolobus solfataricus).